A 245-amino-acid polypeptide reads, in one-letter code: Biosynthetic peptidoglycan transglycosylase (245 aa).

The chain crosses the membrane as a helical span at residues 20-42; it reads VYAGSVFAGAWLATQLFYLAQIA.

The protein belongs to the glycosyltransferase 51 family.

It localises to the cell inner membrane. The catalysed reaction is [GlcNAc-(1-&gt;4)-Mur2Ac(oyl-L-Ala-gamma-D-Glu-L-Lys-D-Ala-D-Ala)](n)-di-trans,octa-cis-undecaprenyl diphosphate + beta-D-GlcNAc-(1-&gt;4)-Mur2Ac(oyl-L-Ala-gamma-D-Glu-L-Lys-D-Ala-D-Ala)-di-trans,octa-cis-undecaprenyl diphosphate = [GlcNAc-(1-&gt;4)-Mur2Ac(oyl-L-Ala-gamma-D-Glu-L-Lys-D-Ala-D-Ala)](n+1)-di-trans,octa-cis-undecaprenyl diphosphate + di-trans,octa-cis-undecaprenyl diphosphate + H(+). It functions in the pathway cell wall biogenesis; peptidoglycan biosynthesis. Functionally, peptidoglycan polymerase that catalyzes glycan chain elongation from lipid-linked precursors. The polypeptide is Biosynthetic peptidoglycan transglycosylase (Burkholderia cenocepacia (strain HI2424)).